Reading from the N-terminus, the 445-residue chain is DNA repair protein RadA (445 aa).

The segment at 10-27 (CSNCANISHKWSGQCFDC) adopts a C4-type zinc-finger fold. 90-97 (GEPGIGKS) serves as a coordination point for ATP. The RadA KNRFG motif signature appears at 249–253 (KNRFG). The tract at residues 348–445 (EIYLSIAGGL…HLQDLKEIIK (98 aa)) is lon-protease-like.

It belongs to the RecA family. RadA subfamily.

Its function is as follows. DNA-dependent ATPase involved in processing of recombination intermediates, plays a role in repairing DNA breaks. Stimulates the branch migration of RecA-mediated strand transfer reactions, allowing the 3' invading strand to extend heteroduplex DNA faster. Binds ssDNA in the presence of ADP but not other nucleotides, has ATPase activity that is stimulated by ssDNA and various branched DNA structures, but inhibited by SSB. Does not have RecA's homology-searching function. This is DNA repair protein RadA from Rickettsia typhi (strain ATCC VR-144 / Wilmington).